A 216-amino-acid polypeptide reads, in one-letter code: Sarcospan (216 aa).

Topologically, residues 1 to 26 (MGRKPSPRAQELPEEEARTCCGCRFP) are cytoplasmic. A helical transmembrane segment spans residues 27-47 (LLLALLQLALGIAVTVLGFLM). Residues 48-59 (ASISPSLLVRDT) lie on the Extracellular side of the membrane. A helical membrane pass occupies residues 60-80 (PFWAGSIVCVVAYLGLFMLCV). Topologically, residues 81-95 (SYQVDERTCVQFSMK) are cytoplasmic. A helical transmembrane segment spans residues 96 to 116 (VFYFLLSALGLMVCMLAVAFA). At 117–166 (AHHYSLLAQFTCETSLDSCQCKLPSSEPLSRAFVYRDVTDCTSVTGTFKL) the chain is on the extracellular side. The chain crosses the membrane as a helical span at residues 167–187 (FLIIQMVLNLVCGLVCLLACF). The Cytoplasmic portion of the chain corresponds to 188–216 (VMWKHRYQVFYVGVGLRSLMASDGQLPKA).

Its subcellular location is the cell membrane. It localises to the sarcolemma. The protein resides in the postsynaptic cell membrane. Component of the dystrophin-glycoprotein complex (DGC), a complex that spans the muscle plasma membrane and forms a link between the F-actin cytoskeleton and the extracellular matrix. Preferentially associates with the sarcoglycan subcomplex of the DGC. The protein is Sarcospan (Sspn) of Mus musculus (Mouse).